We begin with the raw amino-acid sequence, 442 residues long: Putative aminohydrolase SsnA (442 aa).

Histidine 62, histidine 64, histidine 227, and aspartate 312 together coordinate Zn(2+).

The protein belongs to the metallo-dependent hydrolases superfamily. ATZ/TRZ family.

The polypeptide is Putative aminohydrolase SsnA (ssnA) (Escherichia coli (strain K12)).